Consider the following 554-residue polypeptide: Glucose-6-phosphate isomerase 1 (554 aa).

Glu359 acts as the Proton donor in catalysis. Active-site residues include His390 and Lys518.

This sequence belongs to the GPI family.

It localises to the cytoplasm. It carries out the reaction alpha-D-glucose 6-phosphate = beta-D-fructose 6-phosphate. The protein operates within carbohydrate biosynthesis; gluconeogenesis. It participates in carbohydrate degradation; glycolysis; D-glyceraldehyde 3-phosphate and glycerone phosphate from D-glucose: step 2/4. Functionally, catalyzes the reversible isomerization of glucose-6-phosphate to fructose-6-phosphate. The polypeptide is Glucose-6-phosphate isomerase 1 (Pseudomonas putida (strain ATCC 47054 / DSM 6125 / CFBP 8728 / NCIMB 11950 / KT2440)).